A 151-amino-acid chain; its full sequence is Deoxyuridine 5'-triphosphate nucleotidohydrolase (151 aa).

Substrate-binding positions include Arg-70 to Gly-72, Asn-83, Leu-87 to Asp-89, and Met-97.

It belongs to the dUTPase family. Requires Mg(2+) as cofactor.

The catalysed reaction is dUTP + H2O = dUMP + diphosphate + H(+). The protein operates within pyrimidine metabolism; dUMP biosynthesis; dUMP from dCTP (dUTP route): step 2/2. Functionally, this enzyme is involved in nucleotide metabolism: it produces dUMP, the immediate precursor of thymidine nucleotides and it decreases the intracellular concentration of dUTP so that uracil cannot be incorporated into DNA. The chain is Deoxyuridine 5'-triphosphate nucleotidohydrolase from Pseudomonas putida (strain W619).